The chain runs to 178 residues: Adenine phosphoribosyltransferase (178 aa).

It belongs to the purine/pyrimidine phosphoribosyltransferase family. In terms of assembly, homodimer.

It localises to the cytoplasm. It carries out the reaction AMP + diphosphate = 5-phospho-alpha-D-ribose 1-diphosphate + adenine. It functions in the pathway purine metabolism; AMP biosynthesis via salvage pathway; AMP from adenine: step 1/1. Its function is as follows. Catalyzes a salvage reaction resulting in the formation of AMP, that is energically less costly than de novo synthesis. The sequence is that of Adenine phosphoribosyltransferase from Cereibacter sphaeroides (strain KD131 / KCTC 12085) (Rhodobacter sphaeroides).